We begin with the raw amino-acid sequence, 483 residues long: Cobyric acid synthase (483 aa).

One can recognise a GATase cobBQ-type domain in the interval 251-438 (ALIVAVPMLP…LHGVFSADRF (188 aa)). Catalysis depends on cysteine 333, which acts as the Nucleophile. Histidine 430 is an active-site residue.

Belongs to the CobB/CobQ family. CobQ subfamily.

It participates in cofactor biosynthesis; adenosylcobalamin biosynthesis. Catalyzes amidations at positions B, D, E, and G on adenosylcobyrinic A,C-diamide. NH(2) groups are provided by glutamine, and one molecule of ATP is hydrogenolyzed for each amidation. The protein is Cobyric acid synthase of Brucella suis (strain ATCC 23445 / NCTC 10510).